Here is a 311-residue protein sequence, read N- to C-terminus: Aspartate carbamoyltransferase catalytic subunit (311 aa).

Arginine 55 and threonine 56 together coordinate carbamoyl phosphate. L-aspartate is bound at residue lysine 85. Arginine 106, histidine 135, and glutamine 138 together coordinate carbamoyl phosphate. Positions 168 and 230 each coordinate L-aspartate. Residues leucine 268 and proline 269 each contribute to the carbamoyl phosphate site.

It belongs to the aspartate/ornithine carbamoyltransferase superfamily. ATCase family. As to quaternary structure, heterododecamer (2C3:3R2) of six catalytic PyrB chains organized as two trimers (C3), and six regulatory PyrI chains organized as three dimers (R2).

The catalysed reaction is carbamoyl phosphate + L-aspartate = N-carbamoyl-L-aspartate + phosphate + H(+). The protein operates within pyrimidine metabolism; UMP biosynthesis via de novo pathway; (S)-dihydroorotate from bicarbonate: step 2/3. Functionally, catalyzes the condensation of carbamoyl phosphate and aspartate to form carbamoyl aspartate and inorganic phosphate, the committed step in the de novo pyrimidine nucleotide biosynthesis pathway. The polypeptide is Aspartate carbamoyltransferase catalytic subunit (Cronobacter sakazakii (strain ATCC BAA-894) (Enterobacter sakazakii)).